Reading from the N-terminus, the 452-residue chain is Phosphoglucosamine mutase (452 aa).

The active-site Phosphoserine intermediate is Ser-108. Positions 108, 247, 249, and 251 each coordinate Mg(2+). Phosphoserine is present on Ser-108.

It belongs to the phosphohexose mutase family. Mg(2+) is required as a cofactor. In terms of processing, activated by phosphorylation.

It catalyses the reaction alpha-D-glucosamine 1-phosphate = D-glucosamine 6-phosphate. Catalyzes the conversion of glucosamine-6-phosphate to glucosamine-1-phosphate. The protein is Phosphoglucosamine mutase of Paraburkholderia xenovorans (strain LB400).